The chain runs to 251 residues: Protein PBMUCL2 (251 aa).

An N-terminal signal peptide occupies residues 1–22 (MPRYVPLLLLLLLLRCSERGGG). Disordered regions lie at residues 36–55 (WRDG…DRAS) and 65–251 (LSQS…THLL). Residues 72 to 87 (KHPETSPKDSRIREND) are compositionally biased toward basic and acidic residues. N-linked (GlcNAc...) asparagine glycosylation is present at N120. A compositionally biased stretch (polar residues) spans 150–164 (TKDSVTADPGTTENF). The tract at residues 153–251 (SVTADPGTTE…TTKHGDTHLL (99 aa)) is 15 X 11 AA approximate repeats. The span at 241 to 251 (ETTKHGDTHLL) shows a compositional bias: basic and acidic residues.

Detected in the brain, lung, spleen, thymus and prostate.

The protein resides in the secreted. The protein is Protein PBMUCL2 (HCG22) of Homo sapiens (Human).